Reading from the N-terminus, the 315-residue chain is Glutaminase (315 aa).

Substrate is bound by residues Ser-70, Asn-120, Glu-166, Asn-173, Tyr-197, Tyr-249, and Val-267.

Belongs to the glutaminase family. Homotetramer.

It catalyses the reaction L-glutamine + H2O = L-glutamate + NH4(+). This chain is Glutaminase, found in Sinorhizobium fredii (strain NBRC 101917 / NGR234).